The chain runs to 106 residues: 3-phenylpropionate/cinnamic acid dioxygenase ferredoxin subunit (106 aa).

Residues 4–99 (IYACPVADVP…VHVEGGDIFI (96 aa)) form the Rieske domain. [2Fe-2S] cluster-binding residues include Cys-42, His-44, Cys-62, and His-65.

The protein belongs to the bacterial ring-hydroxylating dioxygenase ferredoxin component family. In terms of assembly, this dioxygenase system consists of four proteins: the two subunits of the hydroxylase component (HcaE and HcaF), a ferredoxin (HcaC) and a ferredoxin reductase (HcaD). [2Fe-2S] cluster serves as cofactor.

Its pathway is aromatic compound metabolism; 3-phenylpropanoate degradation. In terms of biological role, part of the multicomponent 3-phenylpropionate dioxygenase, that converts 3-phenylpropionic acid (PP) and cinnamic acid (CI) into 3-phenylpropionate-dihydrodiol (PP-dihydrodiol) and cinnamic acid-dihydrodiol (CI-dihydrodiol), respectively. This protein seems to be a 2Fe-2S ferredoxin. This is 3-phenylpropionate/cinnamic acid dioxygenase ferredoxin subunit from Shigella flexneri serotype 5b (strain 8401).